A 716-amino-acid polypeptide reads, in one-letter code: Radial spoke head protein 4 homolog A (716 aa).

Disordered stretches follow at residues 1–164, 375–410, 506–526, and 697–716; these read MEDS…CGRR, EGED…PKSF, GEEE…FEEN, and LLAA…DDYD. Residues 8 to 25 are compositionally biased toward basic and acidic residues; sequence KQEKENQEELGETRRPWE. Low complexity-rich tracts occupy residues 29–42, 54–66, and 80–100; these read AASP…SSEP, QSRS…PQSR, and SSPA…LAPA. A compositionally biased stretch (polar residues) spans 140 to 156; sequence HHTSQSEGNTFQQSQQP. The span at 375–389 shows a compositional bias: acidic residues; the sequence is EGEDEEEVEEEDVAE. Position 396 is a phosphoserine (Ser396). Composition is skewed to acidic residues over residues 506–516 and 701–716; these read GEEEGEEEEEA and ENEE…DDYD.

It belongs to the flagellar radial spoke RSP4/6 family. As to quaternary structure, interacts with RSPH6A. As to expression, expressed in trachea, lungs, and testes. Very strong expression is detected in nasal brushings.

It localises to the cytoplasm. The protein localises to the cytoskeleton. It is found in the cilium axoneme. Its subcellular location is the cell projection. The protein resides in the cilium. Its function is as follows. Component of the axonemal radial spoke head which plays an important role in ciliary motility. Essential for triplet radial spokes (RS1, RS2 and RS3) head assembly in the motile cilia. The sequence is that of Radial spoke head protein 4 homolog A (RSPH4A) from Homo sapiens (Human).